The chain runs to 693 residues: Elongation factor G (693 aa).

A tr-type G domain is found at 7-282; the sequence is EKIRNIGITA…SVIDYLPAPT (276 aa). Residues 16–23, 80–84, and 134–137 contribute to the GTP site; these read AHIDAGKT, DTPGH, and NKLD.

It belongs to the TRAFAC class translation factor GTPase superfamily. Classic translation factor GTPase family. EF-G/EF-2 subfamily.

It localises to the cytoplasm. Catalyzes the GTP-dependent ribosomal translocation step during translation elongation. During this step, the ribosome changes from the pre-translocational (PRE) to the post-translocational (POST) state as the newly formed A-site-bound peptidyl-tRNA and P-site-bound deacylated tRNA move to the P and E sites, respectively. Catalyzes the coordinated movement of the two tRNA molecules, the mRNA and conformational changes in the ribosome. This chain is Elongation factor G, found in Granulibacter bethesdensis (strain ATCC BAA-1260 / CGDNIH1).